A 216-amino-acid chain; its full sequence is Phosducin-like protein 3 (216 aa).

Positions 13-59 (AKTIEQQLDQQLDRLDNLDSDDLKVLREQRLREMKDLNNKKQEWLRN) form a coiled coil. Residues 29–163 (NLDSDDLKVL…DLGNCDDFAT (135 aa)) form the Phosducin domain.

It belongs to the phosducin family. Highly expressed in germline cells of the testis from the spermatogonia stage until the early spermatid stage but is no longer observed in late-stage spermatids in the distal end of the testis.

The enzyme catalyses [thioredoxin]-dithiol + NADP(+) = [thioredoxin]-disulfide + NADPH + H(+). Its function is as follows. Has redox activity with thioredoxin. Required for male fertility and maturation of sperm past the canoe stage during spermiogenesis. The chain is Phosducin-like protein 3 from Drosophila melanogaster (Fruit fly).